Consider the following 290-residue polypeptide: Small ribosomal subunit biogenesis GTPase RsgA (290 aa).

In terms of domain architecture, CP-type G spans 61-218; it reads SSELLRPAVA…IVDTPGFSTL (158 aa). GTP contacts are provided by residues 110–113 and 161–169; these read NKVD and GPSGAGKST. The Zn(2+) site is built by Cys-243, Cys-248, His-250, and Cys-256.

This sequence belongs to the TRAFAC class YlqF/YawG GTPase family. RsgA subfamily. Monomer. Associates with 30S ribosomal subunit, binds 16S rRNA. It depends on Zn(2+) as a cofactor.

The protein localises to the cytoplasm. Its function is as follows. One of several proteins that assist in the late maturation steps of the functional core of the 30S ribosomal subunit. Helps release RbfA from mature subunits. May play a role in the assembly of ribosomal proteins into the subunit. Circularly permuted GTPase that catalyzes slow GTP hydrolysis, GTPase activity is stimulated by the 30S ribosomal subunit. In Clostridium botulinum (strain Eklund 17B / Type B), this protein is Small ribosomal subunit biogenesis GTPase RsgA.